The primary structure comprises 511 residues: Histidine ammonia-lyase (511 aa).

The segment at residues 142 to 144 (ASG) is a cross-link (5-imidazolinone (Ala-Gly)). The residue at position 143 (Ser-143) is a 2,3-didehydroalanine (Ser).

It belongs to the PAL/histidase family. In terms of processing, contains an active site 4-methylidene-imidazol-5-one (MIO), which is formed autocatalytically by cyclization and dehydration of residues Ala-Ser-Gly.

It localises to the cytoplasm. The enzyme catalyses L-histidine = trans-urocanate + NH4(+). It participates in amino-acid degradation; L-histidine degradation into L-glutamate; N-formimidoyl-L-glutamate from L-histidine: step 1/3. The chain is Histidine ammonia-lyase from Brucella abortus (strain S19).